We begin with the raw amino-acid sequence, 619 residues long: Alpha-L-arabinofuranosidase C (619 aa).

A signal peptide spans M1–A37. Residues A38–A136 enclose the CBM2 domain. C39 and C133 form a disulfide bridge. One can recognise a CBM6 domain in the interval L163 to V289. The tract at residues S300 to Q319 is disordered.

It belongs to the glycosyl hydrolase 62 family.

Its subcellular location is the secreted. It catalyses the reaction Hydrolysis of terminal non-reducing alpha-L-arabinofuranoside residues in alpha-L-arabinosides.. The protein operates within glycan metabolism; hemicellulose degradation. Functionally, xylanase C contributes to hydrolyze hemicellulose, the major component of plant cell-walls. In Cellvibrio japonicus (strain Ueda107) (Pseudomonas fluorescens subsp. cellulosa), this protein is Alpha-L-arabinofuranosidase C (xynC).